The following is a 370-amino-acid chain: Cytochrome b (370 aa).

4 helical membrane-spanning segments follow: residues 25-45 (FGSM…FLAV), 69-90 (WLMQ…YIHI), 105-125 (WLSG…GYVL), and 170-190 (FFAL…LHVM). Heme b contacts are provided by His-75 and His-89. 2 residues coordinate heme b: His-174 and His-188. His-193 contacts a ubiquinone. A run of 4 helical transmembrane segments spans residues 218-238 (YKDL…VSFS), 280-300 (LGGA…PFTH), 312-332 (FMQM…WTAT), and 339-358 (FTLI…ISNP).

The protein belongs to the cytochrome b family. The cytochrome bc1 complex contains 3 respiratory subunits (MT-CYB, CYC1 and UQCRFS1), 2 core proteins (UQCRC1 and UQCRC2) and probably 6 low-molecular weight proteins. Requires heme b as cofactor.

It localises to the mitochondrion inner membrane. Its function is as follows. Component of the ubiquinol-cytochrome c reductase complex (complex III or cytochrome b-c1 complex) that is part of the mitochondrial respiratory chain. The b-c1 complex mediates electron transfer from ubiquinol to cytochrome c. Contributes to the generation of a proton gradient across the mitochondrial membrane that is then used for ATP synthesis. This chain is Cytochrome b (MT-CYB), found in Eunectes notaeus (Yellow anaconda).